The following is a 297-amino-acid chain: Lipoyl synthase (297 aa).

[4Fe-4S] cluster is bound by residues Cys37, Cys42, Cys48, Cys63, Cys67, Cys70, and Ser276. The 217-residue stretch at 49-265 (WSRKHATVMI…ERIAKTKGFL (217 aa)) folds into the Radical SAM core domain.

It belongs to the radical SAM superfamily. Lipoyl synthase family. [4Fe-4S] cluster is required as a cofactor.

The protein resides in the cytoplasm. It carries out the reaction [[Fe-S] cluster scaffold protein carrying a second [4Fe-4S](2+) cluster] + N(6)-octanoyl-L-lysyl-[protein] + 2 oxidized [2Fe-2S]-[ferredoxin] + 2 S-adenosyl-L-methionine + 4 H(+) = [[Fe-S] cluster scaffold protein] + N(6)-[(R)-dihydrolipoyl]-L-lysyl-[protein] + 4 Fe(3+) + 2 hydrogen sulfide + 2 5'-deoxyadenosine + 2 L-methionine + 2 reduced [2Fe-2S]-[ferredoxin]. The protein operates within protein modification; protein lipoylation via endogenous pathway; protein N(6)-(lipoyl)lysine from octanoyl-[acyl-carrier-protein]: step 2/2. In terms of biological role, catalyzes the radical-mediated insertion of two sulfur atoms into the C-6 and C-8 positions of the octanoyl moiety bound to the lipoyl domains of lipoate-dependent enzymes, thereby converting the octanoylated domains into lipoylated derivatives. The polypeptide is Lipoyl synthase (Rickettsia typhi (strain ATCC VR-144 / Wilmington)).